Here is a 589-residue protein sequence, read N- to C-terminus: Mitogen-activated protein kinase 8 (589 aa).

A disordered region spans residues 18 to 56 (RPSSSSSSSSSNNNNNNHEQPIFNSSSFSSSSNPNHSAN). Composition is skewed to low complexity over residues 20–34 (SSSSSSSSSNNNNNN) and 41–56 (NSSSFSSSSNPNHSAN). Residues 104–395 (YQIQEVVGKG…AEDALADPYF (292 aa)) form the Protein kinase domain. ATP contacts are provided by residues 110 to 118 (VGKGSYGVV) and Lys-133. Asp-230 (proton acceptor) is an active-site residue. A Phosphothreonine modification is found at Thr-266. The TXY signature appears at 266 to 268 (TDY). The residue at position 268 (Tyr-268) is a Phosphotyrosine. Position 271 is a phosphothreonine (Thr-271). A disordered region spans residues 474–589 (NQGKPGAAGG…TDKVASLHNS (116 aa)).

This sequence belongs to the protein kinase superfamily. CMGC Ser/Thr protein kinase family. MAP kinase subfamily. Interacts with CAM3, CAM4 and CAM7 in an calcium-dependent manner. Dually phosphorylated on Thr-266 and Tyr-268, which activates the enzyme. Autophosphorylated. As to expression, ubiquitous.

It carries out the reaction L-seryl-[protein] + ATP = O-phospho-L-seryl-[protein] + ADP + H(+). The enzyme catalyses L-threonyl-[protein] + ATP = O-phospho-L-threonyl-[protein] + ADP + H(+). Its activity is regulated as follows. Activated by threonine and tyrosine phosphorylation. Activated by two independent mechanisms, the binding of CAMs in a calcium-dependent manner and the phosphorylation by MAP kinase kinase MKK3. Activated in response to mechanical wounding, hydrogen peroxide and jasmonic acid (JA). Its function is as follows. MKK3-MPK8 and CAMs-MPK8 modules negatively regulates ROS accumulation through controlling expression of the RBOHD gene during wounding. The sequence is that of Mitogen-activated protein kinase 8 (MPK8) from Arabidopsis thaliana (Mouse-ear cress).